Here is a 418-residue protein sequence, read N- to C-terminus: Neurotensin receptor type 1 (418 aa).

Topologically, residues 1–67 are extracellular; the sequence is MRLNSSAPGT…TDIYSKVLVT (67 aa). Asn-4, Asn-37, and Asn-41 each carry an N-linked (GlcNAc...) asparagine glycan. Residues 68-88 form a helical membrane-spanning segment; the sequence is AVYLALFVVGTVGNTVTAFTL. Topologically, residues 89-102 are cytoplasmic; sequence ARKKSLQSLQSTVH. Residues 103–122 form a helical membrane-spanning segment; that stretch reads YHLGSLALSDLLTLLLAMPV. Residues 123-142 are Extracellular-facing; it reads ELYNFIWVHHPWAFGDAGCR. Cysteines 141 and 224 form a disulfide. Residues 143-164 traverse the membrane as a helical segment; sequence GYYFLRDACTYATALNVASLSV. Residues 165–184 are Cytoplasmic-facing; sequence ERYLAICHPFKAKTLMSRSR. The chain crosses the membrane as a helical span at residues 185–205; the sequence is TKKFISAIWLASALLAVPMLF. Residues 206-234 lie on the Extracellular side of the membrane; it reads TMGEQNRSADGQHAGGLVCTPTIHTATVK. The chain crosses the membrane as a helical span at residues 235 to 259; sequence VVIQVNTFMSFIFPMVVISVLNTII. At 260–303 the chain is on the cytoplasmic side; it reads ANKLTVMVRQAAEQGQVCTVGGEHSTFSMAIEPGRVQALRHGVR. The helical transmembrane segment at 304–325 threads the bilayer; sequence VLRAVVIAFVVCWLPYHVRRLM. Residues 321–344 form a neurotensin binding region; the sequence is VRRLMFCYISDEQWTPFLYDFYHY. Topologically, residues 326-343 are extracellular; sequence FCYISDEQWTPFLYDFYH. A helical transmembrane segment spans residues 344 to 364; sequence YFYMVTNALFYVSSTINPILY. Over 365–418 the chain is Cytoplasmic; the sequence is NLVSANFRHIFLATLACLCPVWRRRRKRPAFSRKADSVSSNHTLSSNATRETLY. S-palmitoyl cysteine attachment occurs at residues Cys-381 and Cys-383.

It belongs to the G-protein coupled receptor 1 family. Neurotensin receptor subfamily. NTSR1 sub-subfamily. As to quaternary structure, interacts (palmitoylated form) with GNA11. In terms of processing, N-glycosylated. Palmitoylated; this is required for normal localization at membrane rafts and normal GNA11-mediated activation of down-stream signaling cascades. The palmitoylation level increases in response to neurotensin treatment. As to expression, expressed in prostate (at protein level). Detected in colon and peripheral blood mononuclear cells. Detected at very low levels in brain.

The protein resides in the cell membrane. The protein localises to the membrane raft. G-protein coupled receptor for the tridecapeptide neurotensin (NTS). Signaling is effected via G proteins that activate a phosphatidylinositol-calcium second messenger system. Signaling leads to the activation of downstream MAP kinases and protects cells against apoptosis. The sequence is that of Neurotensin receptor type 1 (NTSR1) from Homo sapiens (Human).